The chain runs to 490 residues: Costunolide synthase (490 aa).

The chain crosses the membrane as a helical; Signal-anchor for type II membrane protein span at residues 3-23; sequence PLTIVSLAVASFLLFAFWALS. 2 N-linked (GlcNAc...) asparagine glycosylation sites follow: N167 and N255. Residue C432 coordinates heme.

This sequence belongs to the cytochrome P450 family. Requires heme as cofactor.

It is found in the membrane. It carries out the reaction germacra-1(10),4,11(13)-trien-12-oate + reduced [NADPH--hemoprotein reductase] + O2 = (+)-costunolide + oxidized [NADPH--hemoprotein reductase] + 2 H2O. Its pathway is secondary metabolite biosynthesis; terpenoid biosynthesis. In terms of biological role, involved in the biosynthesis of germacrene-derived sesquiterpene lactones. Component of the parthenolide biosynthetic pathway; parthenolide and conjugates are promising anti-cancer drugs highly active against colon cancer cells. Hydroxylates germacrene A acid to 6-alpha-hydroxy-germacrne A acid, a precursor of sesquiterpene lactones that spontaneously undergoes a lactonization which yields costunolide. This chain is Costunolide synthase, found in Lactuca sativa (Garden lettuce).